A 172-amino-acid polypeptide reads, in one-letter code: uncharacterized protein (172 aa).

This is an uncharacterized protein from Homo sapiens (Human).